The following is a 499-amino-acid chain: Cysteine--tRNA ligase (499 aa).

Cys31 provides a ligand contact to Zn(2+). Positions 33 to 43 (VTVYDLCHLGH) match the 'HIGH' region motif. Residues Cys215, His240, and Glu244 each contribute to the Zn(2+) site. A 'KMSKS' region motif is present at residues 272 to 276 (KMSKS). Lys275 lines the ATP pocket.

The protein belongs to the class-I aminoacyl-tRNA synthetase family. In terms of assembly, monomer. Zn(2+) is required as a cofactor.

It localises to the cytoplasm. It carries out the reaction tRNA(Cys) + L-cysteine + ATP = L-cysteinyl-tRNA(Cys) + AMP + diphosphate. In Synechococcus sp. (strain WH7803), this protein is Cysteine--tRNA ligase.